The chain runs to 630 residues: 1-deoxy-D-xylulose-5-phosphate synthase (630 aa).

Thiamine diphosphate-binding positions include His-80 and 121–123; that span reads GHS. Position 152 (Asp-152) interacts with Mg(2+). Thiamine diphosphate-binding positions include 153–154, Asn-181, Tyr-288, and Glu-370; that span reads GA. Position 181 (Asn-181) interacts with Mg(2+).

This sequence belongs to the transketolase family. DXPS subfamily. Homodimer. It depends on Mg(2+) as a cofactor. Thiamine diphosphate is required as a cofactor.

It catalyses the reaction D-glyceraldehyde 3-phosphate + pyruvate + H(+) = 1-deoxy-D-xylulose 5-phosphate + CO2. It functions in the pathway metabolic intermediate biosynthesis; 1-deoxy-D-xylulose 5-phosphate biosynthesis; 1-deoxy-D-xylulose 5-phosphate from D-glyceraldehyde 3-phosphate and pyruvate: step 1/1. Its function is as follows. Catalyzes the acyloin condensation reaction between C atoms 2 and 3 of pyruvate and glyceraldehyde 3-phosphate to yield 1-deoxy-D-xylulose-5-phosphate (DXP). The sequence is that of 1-deoxy-D-xylulose-5-phosphate synthase from Colwellia psychrerythraea (strain 34H / ATCC BAA-681) (Vibrio psychroerythus).